We begin with the raw amino-acid sequence, 194 residues long: Crossover junction endodeoxyribonuclease RuvC (194 aa).

Active-site residues include Asp-7, Glu-68, and Asp-141. 3 residues coordinate Mg(2+): Asp-7, Glu-68, and Asp-141. The tract at residues Gly-162 to Met-194 is disordered. Residues Thr-184 to Met-194 are compositionally biased toward basic residues.

Belongs to the RuvC family. As to quaternary structure, homodimer which binds Holliday junction (HJ) DNA. The HJ becomes 2-fold symmetrical on binding to RuvC with unstacked arms; it has a different conformation from HJ DNA in complex with RuvA. In the full resolvosome a probable DNA-RuvA(4)-RuvB(12)-RuvC(2) complex forms which resolves the HJ. The cofactor is Mg(2+).

The protein resides in the cytoplasm. The catalysed reaction is Endonucleolytic cleavage at a junction such as a reciprocal single-stranded crossover between two homologous DNA duplexes (Holliday junction).. The RuvA-RuvB-RuvC complex processes Holliday junction (HJ) DNA during genetic recombination and DNA repair. Endonuclease that resolves HJ intermediates. Cleaves cruciform DNA by making single-stranded nicks across the HJ at symmetrical positions within the homologous arms, yielding a 5'-phosphate and a 3'-hydroxyl group; requires a central core of homology in the junction. The consensus cleavage sequence is 5'-(A/T)TT(C/G)-3'. Cleavage occurs on the 3'-side of the TT dinucleotide at the point of strand exchange. HJ branch migration catalyzed by RuvA-RuvB allows RuvC to scan DNA until it finds its consensus sequence, where it cleaves and resolves the cruciform DNA. The polypeptide is Crossover junction endodeoxyribonuclease RuvC (Bifidobacterium longum subsp. infantis (strain ATCC 15697 / DSM 20088 / JCM 1222 / NCTC 11817 / S12)).